We begin with the raw amino-acid sequence, 1984 residues long: MELTPGAQQQGINYQELTSGWQDVKSMMLVPEPTRKFPSGPLLTSVRFSNLSPESQQQDVKSLEFTVEPKLQSVKHVKLSSVSLQQTIKSVELAPGSLPQRVKYGEQTPRTNYQIMESSELIPRPGHQFAKYAEMIPQPKYQIPKSANLISIPIYHATESSEMAQGLAYKGIDTVEKSVGLTPKLTGRAKESLGMLLQPDLQVPKFVDLTPMVRDQGSKFLGLTPEKSYQILETMELLSQSRPRVKDVGELYMKPLQQTVEYEGITPELKHYFTEAMGLTAEARIQANEFFGMTPKPTSQATGFAERSPRLCPQNLECVEVISEKRLQGEESVVLIPKSLHHVPDSASGMTPGLGHRVPESVELTSKSGVQVEKTLQLTPKPQHHVGSPGIISGLGHQVPESVNLTCKQWLQMEESLEVPLKQTSQVIGHEESVELTSEARQHREVSMGLTKSKNQSMKSPGTTPGPLGRIVEFMRISPEPLDQVTESARTQLQVAQSEEVILIDVPKVVQSVKVTPGPPFQIVKSVTIPRPTPQMVEYIELTPKLQYVRPSEHHTGPCLQDVKSTKLITKPKHQILETVELTGFQIVKTMLIPGPSLQIVKSEELAPGPIPQVVEPIGVALESGIEAINCVDLLPRPHLQELIVPAELTPSPCTQVKSAELTSPQTSPFEEHTILTHKQGLQAVKSTVIKTEPPKVMETEDLNLGHVCQNRDCQKLTSEELQVGTDFSRFLQSSSTTLISSSVRTASELGGLWDSGIQEVSRALDIKNPGTDILQPEETYIDPTMIQSLTFPLALHNQSSDKTANIVENPCPEILGVDVISKETTKRKQMEELENSLQRHLPQSWRSRSRTFQAESGVQKGLIKSFPGRQHNVWESHAWRQRLPRKYLSTMLMLGNILGTTMERKLCSQTSLAERATADTCQSIQNLFGIPAELMEPSQSLPEKGPVTISQPSVVKNYIQRHTFYHGHKKRMALRIWTRGSTSSIIQQYSGTRVRIKKTNSTFNGISQEVIQHMPVSCAGGQLPVLVKSESSLSIFYDREDLVPMEESEDSQSDSQTRISESQHSLKPNYLSQAKTDFSEQFQLLEDLQLKIAAKLLRSQIPPDVPPPLASGLVLKYPICLQCGRCSGLNCHHKLQTTSGPYLLIYPQLHLVRTPEGHGEVRLHLGFRLRIGKRSQISKYRERDRPVIRRSPISPSQRKAKIYTQASKSPTSTIDLQSGPSQSPAPVQVYIRRGQRSRPDLVEKTKTRAPGHYEFTQVHNLPESDSESTQNEKRAKVRTKKTSDSKYPMKRITKRLRKHRKFYTNSRTTIESPSRELAAHLRRKRIGATQTSTASLKRQPKKPSQPKFMQLLFQSLKRAFQTAHRVIASVGRKPVDGTRPDNLWASKNYYPKQNARDYCLPSSIKRDKRSADKLTPAGSTIKQEDILWGGTVQCRSAQQPRRAYSFQPRPLRLPKPTDSQSGIAFQTASVGQPLRTVQKDSSSRSKKNFYRNETSSQESKNLSTPGTRVQARGRILPGSPVKRTWHRHLKDKLTHKEHNHPSFYRERTPRGPSERTRHNPSWRNHRSPSERSQRSSLERRHHSPSQRSHCSPSRKNHSSPSERSWRSPSQRNHCSPPERSCHSLSERGLHSPSQRSHRGPSQRRHHSPSERSHRSPSERSHRSSSERRHRSPSQRSHRGPSERSHCSPSERRHRSPSQRSHRGPSERRHHSPSKRSHRSPARRSHRSPSERSHHSPSERSHHSPSERRHHSPSERSHCSPSERSHCSPSERRHRSPSERRHHSPSEKSHHSPSERSHHSPSERRRHSPLERSRHSLLERSHRSPSERRSHRSFERSHRRISERSHSPSEKSHLSPLERSRCSPSERRGHSSSGKTCHSPSERSHRSPSGMRQGRTSERSHRSSCERTRHSPSEMRPGRPSGRNHCSPSERSRRSPLKEGLKYSFPGERPSHSLSRDFKNQTTLLGTTHKNPKAGQVWRPEATR.

Disordered regions lie at residues 448–467 (MGLT…TPGP), 1045–1067 (PMEE…QHSL), 1181–1287 (YRER…SDSK), 1326–1346 (RIGA…KPSQ), and 1439–1984 (QQPR…EATR). Polar residues-rich tracts occupy residues 450 to 463 (LTKS…SPGT), 1058 to 1067 (TRISESQHSL), and 1205 to 1226 (TQAS…QSPA). The segment covering 1238-1247 (SRPDLVEKTK) has biased composition (basic and acidic residues). 2 stretches are compositionally biased toward polar residues: residues 1458-1471 (TDSQ…TASV) and 1492-1508 (RNET…TPGT). Composition is skewed to basic and acidic residues over residues 1532–1558 (DKLT…ERTR) and 1568–1579 (SPSERSQRSSLE). A run of 3 repeats spans residues 1593–1600 (PSRKNHSS), 1601–1608 (PSERSWRS), and 1609–1616 (PSQRNHCS). Residues 1593–1935 (PSRKNHSSPS…CSPSERSRRS (343 aa)) form a 27 X 8 AA approximate tandem repeat of P-S-E-R-S-H-H-S region. The span at 1599–1610 (SSPSERSWRSPS) shows a compositional bias: low complexity. A compositionally biased stretch (basic and acidic residues) spans 1620–1630 (RSCHSLSERGL). Basic residues predominate over residues 1636 to 1647 (RSHRGPSQRRHH). Tandem repeats lie at residues 1641–1648 (PSQRRHHS), 1649–1656 (PSERSHRS), and 1657–1664 (PSERSHRS). Residues 1648–1667 (SPSERSHRSPSERSHRSSSE) show a composition bias toward basic and acidic residues. Over residues 1668–1679 (RRHRSPSQRSHR) the composition is skewed to basic residues. Positions 1680–1691 (GPSERSHCSPSE) are enriched in basic and acidic residues. 19 tandem repeats follow at residues 1681-1688 (PSERSHCS), 1689-1696 (PSERRHRS), 1697-1704 (PSQRSHRG), 1705-1712 (PSERRHHS), 1713-1720 (PSKRSHRS), 1721-1728 (PARRSHRS), 1729-1736 (PSERSHHS), 1737-1744 (PSERSHHS), 1745-1752 (PSERRHHS), 1753-1760 (PSERSHCS), 1761-1768 (PSERSHCS), 1769-1776 (PSERRHRS), 1777-1784 (PSERRHHS), 1785-1792 (PSEKSHHS), 1793-1800 (PSERSHHS), 1801-1808 (PSERRRHS), 1848-1855 (PSEKSHLS), 1864-1871 (PSERRGHS), and 1880-1887 (PSERSHRS). The span at 1692-1727 (RRHRSPSQRSHRGPSERRHHSPSKRSHRSPARRSHR) shows a compositional bias: basic residues. Residues 1728-1869 (SPSERSHHSP…SRCSPSERRG (142 aa)) show a composition bias toward basic and acidic residues. 3 stretches are compositionally biased toward basic and acidic residues: residues 1895–1917 (RTSE…EMRP), 1928–1941 (PSER…KEGL), and 1949–1959 (RPSHSLSRDFK). A run of 2 repeats spans residues 1921–1928 (SGRNHCSP) and 1929–1935 (SERSRRS). Positions 1960–1969 (NQTTLLGTTH) are enriched in polar residues.

In terms of tissue distribution, expressed in sperm (at protein level).

This is Spermatogenesis-associated protein 31H1 from Homo sapiens (Human).